A 1217-amino-acid chain; its full sequence is DNA-directed RNA polymerase subunit beta' (1217 aa).

Residues Cys-60, Cys-62, Cys-75, and Cys-78 each coordinate Zn(2+). The Mg(2+) site is built by Asp-449, Asp-451, and Asp-453. The Zn(2+) site is built by Cys-821, Cys-895, Cys-902, and Cys-905.

It belongs to the RNA polymerase beta' chain family. In terms of assembly, the RNAP catalytic core consists of 2 alpha, 1 beta, 1 beta' and 1 omega subunit. When a sigma factor is associated with the core the holoenzyme is formed, which can initiate transcription. Requires Mg(2+) as cofactor. Zn(2+) is required as a cofactor.

It catalyses the reaction RNA(n) + a ribonucleoside 5'-triphosphate = RNA(n+1) + diphosphate. Functionally, DNA-dependent RNA polymerase catalyzes the transcription of DNA into RNA using the four ribonucleoside triphosphates as substrates. In Lactobacillus helveticus (strain DPC 4571), this protein is DNA-directed RNA polymerase subunit beta'.